A 967-amino-acid polypeptide reads, in one-letter code: Muscular LMNA-interacting protein (967 aa).

S129 carries the phosphoserine modification. 7 disordered regions span residues 132-154 (EDEATCRQGEQGPPGGPGNIATR), 302-336 (GLASEAQKKMSTSNVLNPKEDVRTCPAPASGASLT), 432-462 (QKVKQTPPTSKKSLSSGSLTTGSTEQEHQAS), 506-628 (GSTL…SASH), 644-685 (QTLQ…TPSL), 786-838 (SMHS…SQLT), and 929-967 (FSVRDEQEKSPTLLSQDTYNKLGHPMVTIPEHDTLDSKE). Positions 144 to 811 (PPGGPGNIAT…GSETIKTPTT (668 aa)) are required for interaction with ISL1. Over residues 437–455 (TPPTSKKSLSSGSLTTGST) the composition is skewed to low complexity. A compositionally biased stretch (polar residues) spans 508 to 523 (TLRSNTTSPQPQTDTF). The segment covering 528-541 (VPSVTPVLSPLSSS) has biased composition (low complexity). A compositionally biased stretch (basic and acidic residues) spans 543-556 (GRKDGDSRTPEKNR). 2 stretches are compositionally biased toward polar residues: residues 558–567 (ICIQPSTLAS) and 658–685 (GSATCPSRTQMPENTASNHSSRVSTPSL). S792 carries the phosphoserine modification. A compositionally biased stretch (polar residues) spans 800 to 811 (MLGSETIKTPTT). A compositionally biased stretch (low complexity) spans 826-835 (SSSSSTASES). Polar residues predominate over residues 938 to 947 (SPTLLSQDTY). The segment covering 958–967 (PEHDTLDSKE) has biased composition (basic and acidic residues).

As to quaternary structure, directly interacts with LMNA. Interacts with ISL1 (via N-terminal domain); the interaction represses ISL1 transactivator activity. Interactions of ISL1 with MLIP1 and GCN5/KAT2A may be mutually exclusive. In terms of processing, may be ubiquitinated by UBE3C ubiquitin ligase; ubiquitination is followed by protein degradation. Predominantly expressed in the heart and skeletal muscle, but detected at lower levels in the lung and brain (at protein level). Also detected in smooth muscle, thymus and kidney. In brain, expressed by a subpopulation of cells within the hippocampus and cortex. In heart, expressed by cardiomyocytes. Expression is reduced in hypertrophic hearts at the transcript level. However, expression in hypertrophic hearts induced by transverse aortic constriction do not differ from control at the protein level.

It is found in the nucleus. It localises to the nucleus envelope. The protein resides in the PML body. The protein localises to the cytoplasm. Its subcellular location is the cytosol. It is found in the cell membrane. It localises to the sarcolemma. Required for myoblast differentiation into myotubes, possibly acting as a transcriptional regulator of the myogenic program. Required for cardiac adaptation to stress through integrated regulation of the AKT/mTOR pathways and FOXO1. Regulates cardiac homeostasis and plays a role in the protection against cardiac hypertrophy. Binds chromatin. May act as a transcriptional cofactor for ISL1, repressing its transcriptional activity. May also repress MYOCD transcriptional activity. This Mus musculus (Mouse) protein is Muscular LMNA-interacting protein.